The primary structure comprises 117 residues: Iron-sulfur cluster insertion protein ErpA (117 aa).

Cysteine 45, cysteine 109, and cysteine 111 together coordinate iron-sulfur cluster.

Belongs to the HesB/IscA family. In terms of assembly, homodimer. It depends on iron-sulfur cluster as a cofactor.

Required for insertion of 4Fe-4S clusters for at least IspG. The chain is Iron-sulfur cluster insertion protein ErpA from Hahella chejuensis (strain KCTC 2396).